The chain runs to 166 residues: UPF0254 protein Maeo_0668 (166 aa).

This sequence belongs to the UPF0254 family.

The sequence is that of UPF0254 protein Maeo_0668 from Methanococcus aeolicus (strain ATCC BAA-1280 / DSM 17508 / OCM 812 / Nankai-3).